We begin with the raw amino-acid sequence, 735 residues long: Ion-translocating oxidoreductase complex subunit C (735 aa).

4Fe-4S ferredoxin-type domains are found at residues methionine 368 to tyrosine 397 and lysine 407 to phenylalanine 436. Positions 377, 380, 383, 387, 416, 419, 422, and 426 each coordinate [4Fe-4S] cluster. The segment at glutamine 534–alanine 716 is disordered.

This sequence belongs to the 4Fe4S bacterial-type ferredoxin family. RnfC subfamily. In terms of assembly, the complex is composed of six subunits: RsxA, RsxB, RsxC, RsxD, RsxE and RsxG. [4Fe-4S] cluster is required as a cofactor.

It is found in the cell inner membrane. Functionally, part of a membrane-bound complex that couples electron transfer with translocation of ions across the membrane. Required to maintain the reduced state of SoxR. This is Ion-translocating oxidoreductase complex subunit C from Salmonella agona (strain SL483).